We begin with the raw amino-acid sequence, 135 residues long: Small ribosomal subunit protein uS9 (135 aa).

Basic and acidic residues predominate over residues 108 to 118 (VGDPRRTEPHK). A disordered region spans residues 108-135 (VGDPRRTEPHKPNRSTKGPRAKRQKSYR). Residues 119-135 (PNRSTKGPRAKRQKSYR) show a composition bias toward basic residues.

Belongs to the universal ribosomal protein uS9 family.

The protein is Small ribosomal subunit protein uS9 (rps9) of Pyrococcus abyssi (strain GE5 / Orsay).